The chain runs to 800 residues: Protocadherin beta-10 (800 aa).

The first 26 residues, 1-26, serve as a signal peptide directing secretion; that stretch reads MAVRELCFPRQRQVLFLFLFWGVSLA. Over 27-692 the chain is Extracellular; the sequence is GSGFGRYSVT…AEADLLTVYL (666 aa). Cadherin domains follow at residues 35–133, 138–242, 247–347, 352–451, and 456–561; these read VTEE…APVF, TVLK…APQF, YETQ…PPEL, FSNS…APAF, and YTLF…SPFV. N-linked (GlcNAc...) asparagine glycosylation is found at Asn169 and Asn181. N-linked (GlcNAc...) asparagine glycosylation is found at Asn418 and Asn436. Asn567 carries N-linked (GlcNAc...) asparagine glycosylation. The Cadherin 6 domain maps to 568–671; it reads GSAPCTELVP…LVDGFSQPYL (104 aa). A helical membrane pass occupies residues 693-713; that stretch reads VVALASVSSLFLLSVLLFVAV. Over 714–800 the chain is Cytoplasmic; that stretch reads RLCRRSRAAS…FRNSFGFNIQ (87 aa).

Its subcellular location is the cell membrane. In terms of biological role, potential calcium-dependent cell-adhesion protein. May be involved in the establishment and maintenance of specific neuronal connections in the brain. This Homo sapiens (Human) protein is Protocadherin beta-10 (PCDHB10).